The chain runs to 612 residues: MPAYRSRTTTHGRNMAGARGLWRATGMKDSDFGKPIIAVVNSFTQFVPGHVHLKDLGQLVAREIEAAGGVAKEFNTIAVDDGIAMGHDGMLYSLPSRELIADSVEYMVNAHCADAMVCISNCDKITPGMLMASLRLNIPTVFVSGGPMEAGKVVLHGKQHALDLVDAMVAAADDKISDEDVKVIERSACPTCGSCSGMFTANSMNCLTEALGLSLPGNGSTLATHADRKRLFVEAGHLIVDLARRYYEQDDVKALPRTIASKQAFENAMALDIAMGGSTNTVLHILAAAHEGEVDFTMADIDALSRRVPCLSKVAPAKSDVHMEDVHRAGGIMSILGELDKGGLLNRDCPTVHAETLGDAIDRWDITRTTSDTVRDFYRAAPGGIPTQVAFSQEARWDELDTDRQNGVIRSVEHPFSKDGGLAVLKGNLAVDGCIVKTAGVDESILKFSGPARVFESQDASVKAILANEIKAGDVVVIRYEGPKGGPGMQEMLYPTSYLKSKGLGKACALITDGRFSGGTSGLSIGHVSPEAANGGTIGLVREGDIIDIDIPNRTISLRVGEAELAARRAEQDARGWRPTEVRKRNVTTALKAYAAFATSADRGAVRDLDAR.

Position 81 (D81) interacts with Mg(2+). Residue C122 participates in [2Fe-2S] cluster binding. Residues D123 and K124 each coordinate Mg(2+). The residue at position 124 (K124) is an N6-carboxylysine. C195 contributes to the [2Fe-2S] cluster binding site. Position 491 (E491) interacts with Mg(2+). S517 serves as the catalytic Proton acceptor.

The protein belongs to the IlvD/Edd family. Homodimer. [2Fe-2S] cluster is required as a cofactor. The cofactor is Mg(2+).

The enzyme catalyses (2R)-2,3-dihydroxy-3-methylbutanoate = 3-methyl-2-oxobutanoate + H2O. It catalyses the reaction (2R,3R)-2,3-dihydroxy-3-methylpentanoate = (S)-3-methyl-2-oxopentanoate + H2O. It functions in the pathway amino-acid biosynthesis; L-isoleucine biosynthesis; L-isoleucine from 2-oxobutanoate: step 3/4. The protein operates within amino-acid biosynthesis; L-valine biosynthesis; L-valine from pyruvate: step 3/4. Its function is as follows. Functions in the biosynthesis of branched-chain amino acids. Catalyzes the dehydration of (2R,3R)-2,3-dihydroxy-3-methylpentanoate (2,3-dihydroxy-3-methylvalerate) into 2-oxo-3-methylpentanoate (2-oxo-3-methylvalerate) and of (2R)-2,3-dihydroxy-3-methylbutanoate (2,3-dihydroxyisovalerate) into 2-oxo-3-methylbutanoate (2-oxoisovalerate), the penultimate precursor to L-isoleucine and L-valine, respectively. This chain is Dihydroxy-acid dehydratase, found in Rhizobium etli (strain ATCC 51251 / DSM 11541 / JCM 21823 / NBRC 15573 / CFN 42).